The primary structure comprises 408 residues: Imidazolonepropionase (408 aa).

H73 and H75 together coordinate Fe(3+). Zn(2+) is bound by residues H73 and H75. Residues R82, Y145, and H178 each contribute to the 4-imidazolone-5-propanoate site. Position 145 (Y145) interacts with N-formimidoyl-L-glutamate. Fe(3+) is bound at residue H243. H243 serves as a coordination point for Zn(2+). 4-imidazolone-5-propanoate is bound at residue Q246. D318 provides a ligand contact to Fe(3+). D318 serves as a coordination point for Zn(2+). N320 and G322 together coordinate N-formimidoyl-L-glutamate. S323 contacts 4-imidazolone-5-propanoate.

It belongs to the metallo-dependent hydrolases superfamily. HutI family. Zn(2+) is required as a cofactor. It depends on Fe(3+) as a cofactor.

Its subcellular location is the cytoplasm. The catalysed reaction is 4-imidazolone-5-propanoate + H2O = N-formimidoyl-L-glutamate. Its pathway is amino-acid degradation; L-histidine degradation into L-glutamate; N-formimidoyl-L-glutamate from L-histidine: step 3/3. Catalyzes the hydrolytic cleavage of the carbon-nitrogen bond in imidazolone-5-propanoate to yield N-formimidoyl-L-glutamate. It is the third step in the universal histidine degradation pathway. This chain is Imidazolonepropionase, found in Shewanella piezotolerans (strain WP3 / JCM 13877).